The chain runs to 101 residues: Protein S100-A7 (101 aa).

Ser-2 is subject to N-acetylserine. EF-hand domains are found at residues 13–48 (MIDMFHKYTRRDDKIEKPSLLTMMKENFPNFLSACD) and 50–85 (KGTNYLADVFEKKDKNEDKKIDFSEFLSLLGDIATD). Residues His-18 and Asp-25 each contribute to the Zn(2+) site. A disulfide bond links Cys-47 and Cys-96. Ca(2+)-binding residues include Asp-63, Asn-65, Asp-67, Lys-69, and Glu-74. Positions 87 and 91 each coordinate Zn(2+).

Interacts with RANBP9. In terms of tissue distribution, fetal ear, skin, and tongue and human cell lines. Highly up-regulated in psoriatic epidermis. Also highly expressed in the urine of bladder squamous cell carcinoma (SCC) bearing patients.

The protein resides in the cytoplasm. It localises to the secreted. The sequence is that of Protein S100-A7 (S100A7) from Homo sapiens (Human).